The following is a 224-amino-acid chain: Transposase for insertion sequence element IS257 in transposon Tn4003 (224 aa).

Positions 33-52 (EILRGRGVNVHHSTVYRWVQ) form a DNA-binding region, H-T-H motif. Residues 73-222 (WRIDETYIKI…SPCHEISIML (150 aa)) form the Integrase catalytic domain.

In terms of biological role, involved in the transposition of the insertion sequence. This Staphylococcus aureus protein is Transposase for insertion sequence element IS257 in transposon Tn4003.